A 144-amino-acid polypeptide reads, in one-letter code: Fluoride-specific ion channel FluC (144 aa).

4 helical membrane-spanning segments follow: residues 7 to 27, 33 to 53, 71 to 91, and 105 to 125; these read LIVMVGGALGTLARYLVSVAA, FIPWGTILPINALGSFVIGFF, LFVMIGLCGGYTTFSSFSLQT, and VNVAASVILCIGAVALGHITA. The Na(+) site is built by Gly79 and Thr82.

This sequence belongs to the fluoride channel Fluc/FEX (TC 1.A.43) family.

It localises to the cell inner membrane. It carries out the reaction fluoride(in) = fluoride(out). With respect to regulation, na(+) is not transported, but it plays an essential structural role and its presence is essential for fluoride channel function. In terms of biological role, fluoride-specific ion channel. Important for reducing fluoride concentration in the cell, thus reducing its toxicity. This Gluconobacter oxydans (strain 621H) (Gluconobacter suboxydans) protein is Fluoride-specific ion channel FluC.